We begin with the raw amino-acid sequence, 419 residues long: Enolase (419 aa).

Gln161 contributes to the (2R)-2-phosphoglycerate binding site. Glu205 serves as the catalytic Proton donor. Positions 240, 283, and 309 each coordinate Mg(2+). 4 residues coordinate (2R)-2-phosphoglycerate: Lys334, Arg363, Ser364, and Lys385. Residue Lys334 is the Proton acceptor of the active site.

Belongs to the enolase family. The cofactor is Mg(2+).

It localises to the cytoplasm. Its subcellular location is the secreted. The protein localises to the cell surface. The catalysed reaction is (2R)-2-phosphoglycerate = phosphoenolpyruvate + H2O. It participates in carbohydrate degradation; glycolysis; pyruvate from D-glyceraldehyde 3-phosphate: step 4/5. Catalyzes the reversible conversion of 2-phosphoglycerate (2-PG) into phosphoenolpyruvate (PEP). It is essential for the degradation of carbohydrates via glycolysis. The sequence is that of Enolase from Saccharolobus islandicus (strain Y.G.57.14 / Yellowstone #1) (Sulfolobus islandicus).